A 410-amino-acid polypeptide reads, in one-letter code: Heat stress transcription factor A-9 (410 aa).

The tract at residues M1 to K44 is disordered. Positions V20 to G33 are enriched in gly residues. Residues G171–R246 adopt a coiled-coil conformation. Residues L179–V229 are hydrophobic repeat HR-A/B. Positions S256–R260 match the Nuclear localization signal motif. Residues A279 to E290 carry the Nuclear export signal motif.

Belongs to the HSF family. Class A subfamily. As to quaternary structure, homotrimer. Post-translationally, exhibits temperature-dependent phosphorylation.

It is found in the cytoplasm. Its subcellular location is the nucleus. Functionally, transcriptional regulator that specifically binds DNA of heat shock promoter elements (HSE). The sequence is that of Heat stress transcription factor A-9 (HSFA9) from Oryza sativa subsp. japonica (Rice).